A 215-amino-acid chain; its full sequence is Small ribosomal subunit protein uS7 (215 aa).

Belongs to the universal ribosomal protein uS7 family. As to quaternary structure, part of the 30S ribosomal subunit.

One of the primary rRNA binding proteins, it binds directly to 16S rRNA where it nucleates assembly of the head domain of the 30S subunit. Is located at the subunit interface close to the decoding center. This chain is Small ribosomal subunit protein uS7, found in Thermococcus kodakarensis (strain ATCC BAA-918 / JCM 12380 / KOD1) (Pyrococcus kodakaraensis (strain KOD1)).